We begin with the raw amino-acid sequence, 62 residues long: Sec-independent protein translocase protein TatA (62 aa).

A helical membrane pass occupies residues 10-32; sequence LLIILIIVIAIFGAGKLAGLGGA.

This sequence belongs to the TatA/E family. In terms of assembly, forms a complex with TatC.

Its subcellular location is the cell membrane. In terms of biological role, part of the twin-arginine translocation (Tat) system that transports large folded proteins containing a characteristic twin-arginine motif in their signal peptide across membranes. TatA could form the protein-conducting channel of the Tat system. This is Sec-independent protein translocase protein TatA from Chloroflexus aurantiacus (strain ATCC 29366 / DSM 635 / J-10-fl).